The sequence spans 264 residues: ATP synthase subunit a (264 aa).

The next 5 helical transmembrane spans lie at 39-59 (LDTL…FYIV), 97-117 (VAPL…MDLV), 139-159 (TADP…VIFY), 205-225 (LFGN…LPWW), and 239-259 (LLVI…YISL).

This sequence belongs to the ATPase A chain family. In terms of assembly, F-type ATPases have 2 components, CF(1) - the catalytic core - and CF(0) - the membrane proton channel. CF(1) has five subunits: alpha(3), beta(3), gamma(1), delta(1), epsilon(1). CF(0) has three main subunits: a(1), b(2) and c(9-12). The alpha and beta chains form an alternating ring which encloses part of the gamma chain. CF(1) is attached to CF(0) by a central stalk formed by the gamma and epsilon chains, while a peripheral stalk is formed by the delta and b chains.

The protein localises to the cell inner membrane. Functionally, key component of the proton channel; it plays a direct role in the translocation of protons across the membrane. This is ATP synthase subunit a from Coxiella burnetii (strain Dugway 5J108-111).